A 273-amino-acid chain; its full sequence is Hydroxyethylthiazole kinase 2 (273 aa).

Met-45 is a binding site for substrate. Residues Lys-120 and Thr-173 each contribute to the ATP site. Residue Gly-200 participates in substrate binding.

This sequence belongs to the Thz kinase family. Mg(2+) serves as cofactor.

It carries out the reaction 5-(2-hydroxyethyl)-4-methylthiazole + ATP = 4-methyl-5-(2-phosphooxyethyl)-thiazole + ADP + H(+). It participates in cofactor biosynthesis; thiamine diphosphate biosynthesis; 4-methyl-5-(2-phosphoethyl)-thiazole from 5-(2-hydroxyethyl)-4-methylthiazole: step 1/1. Its function is as follows. Catalyzes the phosphorylation of the hydroxyl group of 4-methyl-5-beta-hydroxyethylthiazole (THZ). The sequence is that of Hydroxyethylthiazole kinase 2 from Leuconostoc mesenteroides subsp. mesenteroides (strain ATCC 8293 / DSM 20343 / BCRC 11652 / CCM 1803 / JCM 6124 / NCDO 523 / NBRC 100496 / NCIMB 8023 / NCTC 12954 / NRRL B-1118 / 37Y).